A 56-amino-acid polypeptide reads, in one-letter code: UPF0434 protein ECH_0194 (56 aa).

This sequence belongs to the UPF0434 family.

This chain is UPF0434 protein ECH_0194, found in Ehrlichia chaffeensis (strain ATCC CRL-10679 / Arkansas).